A 74-amino-acid chain; its full sequence is DNA-directed RNA polymerase subunit omega (74 aa).

Belongs to the RNA polymerase subunit omega family. The RNAP catalytic core consists of 2 alpha, 1 beta, 1 beta' and 1 omega subunit. When a sigma factor is associated with the core the holoenzyme is formed, which can initiate transcription.

It carries out the reaction RNA(n) + a ribonucleoside 5'-triphosphate = RNA(n+1) + diphosphate. Promotes RNA polymerase assembly. Latches the N- and C-terminal regions of the beta' subunit thereby facilitating its interaction with the beta and alpha subunits. The protein is DNA-directed RNA polymerase subunit omega of Lactobacillus acidophilus (strain ATCC 700396 / NCK56 / N2 / NCFM).